The chain runs to 372 residues: Glutamate 5-kinase (372 aa).

K14 serves as a coordination point for ATP. Substrate contacts are provided by S54, D141, and N153. T173–D174 is an ATP binding site. Residues R280–M358 enclose the PUA domain.

Belongs to the glutamate 5-kinase family.

The protein localises to the cytoplasm. The enzyme catalyses L-glutamate + ATP = L-glutamyl 5-phosphate + ADP. It participates in amino-acid biosynthesis; L-proline biosynthesis; L-glutamate 5-semialdehyde from L-glutamate: step 1/2. Functionally, catalyzes the transfer of a phosphate group to glutamate to form L-glutamate 5-phosphate. This is Glutamate 5-kinase from Burkholderia lata (strain ATCC 17760 / DSM 23089 / LMG 22485 / NCIMB 9086 / R18194 / 383).